The chain runs to 361 residues: Anthranilate phosphoribosyltransferase (361 aa).

5-phospho-alpha-D-ribose 1-diphosphate is bound by residues Gly101, Gly104–Asp105, Thr109, Asn111–Thr114, Lys129–Ser137, and Ser141. Gly101 is a binding site for anthranilate. Ser113 serves as a coordination point for Mg(2+). Asn132 lines the anthranilate pocket. Residue Arg187 coordinates anthranilate. Residues Asp245 and Glu246 each contribute to the Mg(2+) site.

The protein belongs to the anthranilate phosphoribosyltransferase family. As to quaternary structure, homodimer. Mg(2+) is required as a cofactor.

It carries out the reaction N-(5-phospho-beta-D-ribosyl)anthranilate + diphosphate = 5-phospho-alpha-D-ribose 1-diphosphate + anthranilate. It functions in the pathway amino-acid biosynthesis; L-tryptophan biosynthesis; L-tryptophan from chorismate: step 2/5. In terms of biological role, catalyzes the transfer of the phosphoribosyl group of 5-phosphorylribose-1-pyrophosphate (PRPP) to anthranilate to yield N-(5'-phosphoribosyl)-anthranilate (PRA). In Shewanella denitrificans (strain OS217 / ATCC BAA-1090 / DSM 15013), this protein is Anthranilate phosphoribosyltransferase.